Consider the following 236-residue polypeptide: MGRKSVRAKEKKQKRLEERAAMAAVCAKVQAANQLGDPLGAFPVFKKFDRNGLNLSIECCKVSDLDQKTIDWAFELTKTNMQLLYEQSEWGWKEREKREELTDERAWYLIARDELAALVAFVHFRFDVECGDEVLYCYEVQLETRVRRKGVGKFLVQILQLMANSTQMKKVVLTVFKHNHGAYQFFRDALQFEIDETSPSVSGCCSDDCTYEILSKRTKFGDTPHSHTGHCAGCCH.

A lipid anchor (N-myristoyl glycine) is attached at Gly2. Positions 63-217 constitute an N-acetyltransferase domain; it reads SDLDQKTIDW…DCTYEILSKR (155 aa). Substrate contacts are provided by residues Tyr85, 127–129, and Tyr138; that span reads DVE. Acetyl-CoA-binding positions include 140–142 and 148–153; these read VQL and RKGVGK. Thr174 contributes to the substrate binding site. Residue Asn179 participates in acetyl-CoA binding. Position 211 (Tyr211) interacts with substrate.

The protein belongs to the acetyltransferase family. NAA40 subfamily.

Its subcellular location is the cytoplasm. It is found in the nucleus. The catalysed reaction is N-terminal L-seryl-[histone H4] + acetyl-CoA = N-terminal N(alpha)-acetyl-L-seryl-[histone H4] + CoA + H(+). It catalyses the reaction N-terminal L-seryl-[histone H2A] + acetyl-CoA = N-terminal N(alpha)-acetyl-L-seryl-[histone H2A] + CoA + H(+). N-alpha-acetyltransferase that specifically mediates the acetylation of the N-terminal residues of histones H4 and H2A. In contrast to other N-alpha-acetyltransferase, has a very specific selectivity for histones H4 and H2A N-terminus and specifically recognizes the 'Ser-Gly-Arg-Gly sequence'. The polypeptide is N-alpha-acetyltransferase 40 (naa40) (Xenopus laevis (African clawed frog)).